A 405-amino-acid chain; its full sequence is Protein held out wings (405 aa).

One can recognise a KH domain in the interval 142 to 210 (YVPVREHPDF…HLSDDLHVLI (69 aa)).

Homodimer. Interacts with Sxl; promoting nuclear retention of msl-2 transcripts. During embryogenesis, expression is seen in mesodermal precursors of somatic, visceral and pharyngeal muscle. Later in embryogenesis, expression is restricted to heart and muscle attachment sites of the epidermis. During onset of metamorphosis, expression is seen in muscle and muscle attachment cells.

It localises to the nucleus. Functionally, RNA-binding protein involved in muscle development and dosage compensation. Vital role in steroid regulation of muscle development and to control heart rate. Required during embryogenesis, in late stages of somatic muscle development, for myotube migration and during metamorphosis for muscle reorganization. Required for integrin-mediated cell-adhesion in wing blade. Together with Sxl, acts as an inhibitor of dosage compensation in females by preventing production of msl-2 protein, an essential component of the MSL complex. Specifically binds to the 5'-UTR of msl-2 transcripts and cooperates with Sxl to promote nuclear retention of msl-2 mRNAs. The chain is Protein held out wings (how) from Drosophila melanogaster (Fruit fly).